The primary structure comprises 430 residues: Paraneoplastic antigen-like protein 8A (430 aa).

Basic and acidic residues predominate over residues 219 to 228; the sequence is WKNTEDHGDP. 3 disordered regions span residues 219-270, 313-364, and 392-430; these read WKNT…NSNY, DPSD…RKKK, and GLGA…SRKL. A compositionally biased stretch (basic residues) spans 232–250; that stretch reads LVRRPGGKIRSRRRKQKKN. Polar residues predominate over residues 261-270; that stretch reads SQGSNYNSNY.

The protein belongs to the PNMA family.

In Mus musculus (Mouse), this protein is Paraneoplastic antigen-like protein 8A.